Reading from the N-terminus, the 470-residue chain is Zinc finger CCCH domain-containing protein 7 (470 aa).

A disordered region spans residues 122–144; that stretch reads AYSKKESEKQSGQNNTSTASRNH. Positions 131-142 are enriched in polar residues; it reads QSGQNNTSTASR. 5 C3H1-type zinc fingers span residues 240 to 269, 273 to 294, 295 to 321, 322 to 349, and 350 to 372; these read AKKKKYCQFFTRFGKCNKDDGKCPYVHDPS, VCTKFLNGLCANANCKLTHKVI, PERMPDCSYYLQGLCNNEACPYRHVHV, NPIAPICDGFLKGYCSEGDECRKKHSYN, and CPVFEATGSCSQGLKCKLHHPKN. Over residues 370 to 381 the composition is skewed to basic residues; sequence PKNQSKGRKRKR. The disordered stretch occupies residues 370–389; sequence PKNQSKGRKRKRTNEPSQKN.

Possesses RNA-binding and ribonuclease activities in vitro. The polypeptide is Zinc finger CCCH domain-containing protein 7 (Arabidopsis thaliana (Mouse-ear cress)).